We begin with the raw amino-acid sequence, 508 residues long: Lysine--tRNA ligase (508 aa).

Residues Glu418 and Glu425 each coordinate Mg(2+).

It belongs to the class-II aminoacyl-tRNA synthetase family. In terms of assembly, homodimer. Requires Mg(2+) as cofactor.

It is found in the cytoplasm. It carries out the reaction tRNA(Lys) + L-lysine + ATP = L-lysyl-tRNA(Lys) + AMP + diphosphate. The protein is Lysine--tRNA ligase of Burkholderia thailandensis (strain ATCC 700388 / DSM 13276 / CCUG 48851 / CIP 106301 / E264).